The primary structure comprises 544 residues: Chaperonin GroEL 2 (544 aa).

ATP contacts are provided by residues 29–32 (TLGP), 86–90 (DGTTT), Gly413, 479–481 (NAA), and Asp495.

It belongs to the chaperonin (HSP60) family. Forms a cylinder of 14 subunits composed of two heptameric rings stacked back-to-back. Interacts with the co-chaperonin GroES.

It is found in the cytoplasm. The catalysed reaction is ATP + H2O + a folded polypeptide = ADP + phosphate + an unfolded polypeptide.. Together with its co-chaperonin GroES, plays an essential role in assisting protein folding. The GroEL-GroES system forms a nano-cage that allows encapsulation of the non-native substrate proteins and provides a physical environment optimized to promote and accelerate protein folding. The chain is Chaperonin GroEL 2 from Prochlorococcus marinus subsp. pastoris (strain CCMP1986 / NIES-2087 / MED4).